A 383-amino-acid chain; its full sequence is Chaperone protein DnaJ (383 aa).

The region spanning 5-70 is the J domain; the sequence is DYYDVLGVSK…DKKAAYDRYG (66 aa). Residues 142-220 form a CR-type zinc finger; it reads GMQKTISVPG…CRGAGREEKT (79 aa). Zn(2+) contacts are provided by Cys-155, Cys-158, Cys-172, Cys-175, Cys-194, Cys-197, Cys-208, and Cys-211. CXXCXGXG motif repeat units lie at residues 155–162, 172–179, 194–201, and 208–215; these read CSACEGTG, CPTCSGMG, and CQACRGAG.

The protein belongs to the DnaJ family. In terms of assembly, homodimer. The cofactor is Zn(2+).

It localises to the cytoplasm. Its function is as follows. Participates actively in the response to hyperosmotic and heat shock by preventing the aggregation of stress-denatured proteins and by disaggregating proteins, also in an autonomous, DnaK-independent fashion. Unfolded proteins bind initially to DnaJ; upon interaction with the DnaJ-bound protein, DnaK hydrolyzes its bound ATP, resulting in the formation of a stable complex. GrpE releases ADP from DnaK; ATP binding to DnaK triggers the release of the substrate protein, thus completing the reaction cycle. Several rounds of ATP-dependent interactions between DnaJ, DnaK and GrpE are required for fully efficient folding. Also involved, together with DnaK and GrpE, in the DNA replication of plasmids through activation of initiation proteins. In Dinoroseobacter shibae (strain DSM 16493 / NCIMB 14021 / DFL 12), this protein is Chaperone protein DnaJ.